We begin with the raw amino-acid sequence, 230 residues long: Probable septum site-determining protein MinC (230 aa).

This sequence belongs to the MinC family. As to quaternary structure, interacts with MinD and FtsZ.

Its function is as follows. Cell division inhibitor that blocks the formation of polar Z ring septums. Rapidly oscillates between the poles of the cell to destabilize FtsZ filaments that have formed before they mature into polar Z rings. Prevents FtsZ polymerization. The polypeptide is Probable septum site-determining protein MinC (Cronobacter sakazakii (strain ATCC BAA-894) (Enterobacter sakazakii)).